The chain runs to 659 residues: Threonine--tRNA ligase (659 aa).

In terms of domain architecture, TGS spans 1-60 (MTVYLPDGKPLELPEGATAKDVARALGEGWERRAVGAIVDGELYDLLKPLPQGAKVRLLT). Catalytic stretches follow at residues 234–548 (TAEE…EHFA) and 252–552 (DHRR…GDFP). Cysteine 349, histidine 400, and histidine 529 together coordinate Zn(2+).

Belongs to the class-II aminoacyl-tRNA synthetase family. In terms of assembly, homodimer. It depends on Zn(2+) as a cofactor.

The protein localises to the cytoplasm. The catalysed reaction is tRNA(Thr) + L-threonine + ATP = L-threonyl-tRNA(Thr) + AMP + diphosphate + H(+). Its function is as follows. Catalyzes the attachment of threonine to tRNA(Thr) in a two-step reaction: L-threonine is first activated by ATP to form Thr-AMP and then transferred to the acceptor end of tRNA(Thr). Also edits incorrectly charged L-seryl-tRNA(Thr). The chain is Threonine--tRNA ligase from Thermus thermophilus (strain ATCC 27634 / DSM 579 / HB8).